Reading from the N-terminus, the 37-residue chain is NADH dehydrogenase [ubiquinone] 1 alpha subcomplex subunit 5 (37 aa).

It belongs to the complex I NDUFA5 subunit family. Complex I is composed of about 45 different subunits.

It localises to the mitochondrion inner membrane. In terms of biological role, accessory subunit of the mitochondrial membrane respiratory chain NADH dehydrogenase (Complex I), that is believed not to be involved in catalysis. Complex I functions in the transfer of electrons from NADH to the respiratory chain. The immediate electron acceptor for the enzyme is believed to be ubiquinone. This Solanum tuberosum (Potato) protein is NADH dehydrogenase [ubiquinone] 1 alpha subcomplex subunit 5.